The primary structure comprises 797 residues: Inactive dipeptidyl peptidase 10 (797 aa).

The tract at residues Met-1 to Pro-28 is disordered. At Met-1–Lys-34 the chain is on the cytoplasmic side. Residues Gly-35 to Ile-55 traverse the membrane as a helical; Signal-anchor for type II membrane protein segment. At Leu-56–Glu-797 the chain is on the extracellular side. N-linked (GlcNAc...) asparagine glycans are attached at residues Asn-64, Asn-91, Asn-112, and Asn-120. A phosphotyrosine mark is found at Tyr-139 and Tyr-144. Asn-258, Asn-343, Asn-518, and Asn-749 each carry an N-linked (GlcNAc...) asparagine glycan.

It belongs to the peptidase S9B family. DPPIV subfamily. May form oligomers. Interacts with KCND1 and KCND2. N-glycosylation is important for cell surface expression, specially at Asn-258, which is crucial. As to expression, detected in brain cortex (at protein level). Expressed in the brain, predominantly by neurons and not by glia.

Its subcellular location is the cell membrane. Promotes cell surface expression of the potassium channel KCND2. Modulates the activity and gating characteristics of the potassium channel KCND2. Has no dipeptidyl aminopeptidase activity. The protein is Inactive dipeptidyl peptidase 10 (Dpp10) of Mus musculus (Mouse).